The primary structure comprises 570 residues: L-ascorbate oxidase (570 aa).

An N-terminal signal peptide occupies residues 1 to 18; it reads MGMWWIVAVAILAHTASA. Plastocyanin-like domains lie at 33–140 and 154–317; these read WPDC…IIDV and FNLL…LNYV. Disulfide bonds link cysteine 36/cysteine 219, cysteine 98/cysteine 557, and cysteine 197/cysteine 211. Histidine 77 and histidine 79 together coordinate Cu cation. Residue asparagine 109 is glycosylated (N-linked (GlcNAc...) asparagine). Cu cation is bound by residues histidine 121 and histidine 123. The N-linked (GlcNAc...) asparagine glycan is linked to asparagine 196. N-linked (GlcNAc...) asparagine glycans are attached at residues asparagine 229, asparagine 343, asparagine 384, asparagine 407, asparagine 434, asparagine 442, and asparagine 458. One can recognise a Plastocyanin-like 3 domain in the interval 426 to 543; that stretch reads RNRNAKQGNV…MGMGVVFAEG (118 aa). Residues histidine 463, histidine 466, histidine 468, histidine 525, cysteine 526, histidine 527, histidine 531, and methionine 536 each contribute to the Cu cation site.

Belongs to the multicopper oxidase family. As to quaternary structure, dimer. Cu cation serves as cofactor.

It localises to the secreted. It carries out the reaction 4 L-ascorbate + O2 = 4 monodehydro-L-ascorbate radical + 2 H2O. Its pathway is cofactor degradation; L-ascorbate degradation. Functionally, ascorbate oxidase involved in a redox system involving ascorbic acid (AsA). The oxidation of AsA represses responses to high salinity and oxidative stress conditions such as vegetative growth and seed production reductions. Negative regulator of defense responses toward incompatible Turnip mosaic virus (TuMV strain UK1) by preventing jasmonic acid (JA)- dependent accumulation of ascorbic acid (AsA, AS) and dehydroascobic acid (DHA). The polypeptide is L-ascorbate oxidase (Brassica rapa subsp. pekinensis (Chinese cabbage)).